Reading from the N-terminus, the 428-residue chain is Trigger factor (428 aa).

In terms of domain architecture, PPIase FKBP-type spans 163–248; that stretch reads GDIVDIDFEG…VNDVKVKELP (86 aa).

The protein belongs to the FKBP-type PPIase family. Tig subfamily.

The protein resides in the cytoplasm. It catalyses the reaction [protein]-peptidylproline (omega=180) = [protein]-peptidylproline (omega=0). In terms of biological role, involved in protein export. Acts as a chaperone by maintaining the newly synthesized protein in an open conformation. Functions as a peptidyl-prolyl cis-trans isomerase. This is Trigger factor from Acetivibrio thermocellus (strain ATCC 27405 / DSM 1237 / JCM 9322 / NBRC 103400 / NCIMB 10682 / NRRL B-4536 / VPI 7372) (Clostridium thermocellum).